We begin with the raw amino-acid sequence, 26 residues long: L-amino-acid oxidase (26 aa).

Belongs to the flavin monoamine oxidase family. In terms of assembly, monomer. FAD serves as cofactor. In terms of processing, not glycosylated. Expressed by the ink gland.

It is found in the secreted. The enzyme catalyses an L-alpha-amino acid + O2 + H2O = a 2-oxocarboxylate + H2O2 + NH4(+). Functionally, catalyzes the oxidative deamination of positively charged L-amino acids L-Lys and L-Arg but not of amino acids L-His, L-Asp or L-Glu. Has antibacterial activity against the Gram-positive bacterium S.aureus (MIC=15 ug/ml). This antibacterial activity is bacteriostatic in the absence of amino acids L-Lys or L-Arg but bactericidal in their presence. The antibacterial effect is largely dependent on H(2)O(2) produced in the oxidative deamination of substrates. Has hemagglutinating activity towards rabbit erythrocytes. Hemagglutinating activity is inhibited by the glycoprotein fetuin, but not by glucose, mannose, galactose, N-acetylglucosamine, N-acetylgalactosamine or sialic acid. This Aplysia dactylomela (Spotted sea hare) protein is L-amino-acid oxidase.